The primary structure comprises 464 residues: Vitamin D3 hydroxylase-associated protein (464 aa).

Active-site charge relay system residues include lysine 150 and serine 225. Residue serine 249 is the Acyl-ester intermediate of the active site.

It belongs to the amidase family. In terms of tissue distribution, kidney.

It is found in the mitochondrion inner membrane. Functionally, may have a vitamin D3 hydroxylase regulatory function. The polypeptide is Vitamin D3 hydroxylase-associated protein (Gallus gallus (Chicken)).